Consider the following 94-residue polypeptide: Co-chaperonin GroES (94 aa).

It belongs to the GroES chaperonin family. Heptamer of 7 subunits arranged in a ring. Interacts with the chaperonin GroEL.

The protein resides in the cytoplasm. In terms of biological role, together with the chaperonin GroEL, plays an essential role in assisting protein folding. The GroEL-GroES system forms a nano-cage that allows encapsulation of the non-native substrate proteins and provides a physical environment optimized to promote and accelerate protein folding. GroES binds to the apical surface of the GroEL ring, thereby capping the opening of the GroEL channel. This is Co-chaperonin GroES from Clostridium botulinum (strain Alaska E43 / Type E3).